Reading from the N-terminus, the 449-residue chain is Plasmepsin IV (449 aa).

At 1 to 37 (MALTVKEEEFSNTLIKNASAFDRLKLGNLKNLKIQKK) the chain is on the cytoplasmic side. The propeptide occupies 1–121 (MALTVKEEEF…SGYAQKGYLG (121 aa)). The chain crosses the membrane as a helical; Signal-anchor for type II membrane protein span at residues 38-58 (LQFLYLILFVLITGVFFFFLI). Residues 59–449 (GNFYSHRKLY…SVGFAVAKNL (391 aa)) lie on the Lumenal side of the membrane. Residues 137-444 (FYGEGQIGTN…DYEKESVGFA (308 aa)) enclose the Peptidase A1 domain. Asp-155 is a catalytic residue. A disulfide bond links Cys-168 and Cys-173. The active site involves Asp-335. An intrachain disulfide couples Cys-370 to Cys-406.

The protein belongs to the peptidase A1 family. Component of the hemozoin formation complex (HFC) composed of falcipains FP2A and/or FP2B, plasmepsins PMII, PMIII/HAP and PMIV, heme detoxifying protein HDP and falcilysin FLN. The HFC complex is involved in hemoglobin degradation and detoxification of heme in the food vacuole during the asexual blood stage. In terms of processing, proteolytically cleaved into the soluble active mature form by cysteine proteases in the digestive vacuole of trophozoites. Proteolysis requires an acidic environment. Autoprocessing or transprocessing by other plasmepsins such as PMII may serve as an alternate activation system.

It localises to the membrane. The protein localises to the vacuole lumen. The enzyme catalyses Hydrolysis of the bonds linking certain hydrophobic residues in hemoglobin or globin. Also cleaves small molecules substrates such as Ala-Leu-Glu-Arg-Thr-Phe-|-Phe(NO2)-Ser-Phe-Pro-Thr.. Inhibited by pepstatin A. Functionally, during the asexual blood stage, catalyzes the cleavage of denatured host hemoglobin (Hb) or globins. Digestion of host Hb is an essential step which provides the parasite with amino acids for protein synthesis, and regulates osmolarity. In Plasmodium falciparum (isolate HB3), this protein is Plasmepsin IV.